Reading from the N-terminus, the 363-residue chain is NAD(P)H-quinone oxidoreductase subunit 1, chloroplastic (363 aa).

6 helical membrane passes run 30–50 (LVPI…IVWL), 98–118 (FSIG…VIPF), 127–147 (LSIG…GLLM), 248–268 (YSGI…LVSS), 300–320 (VFGT…FLFI), and 336–356 (LLNL…LLTT).

The protein belongs to the complex I subunit 1 family. As to quaternary structure, NDH is composed of at least 16 different subunits, 5 of which are encoded in the nucleus.

The protein resides in the plastid. It localises to the chloroplast thylakoid membrane. It carries out the reaction a plastoquinone + NADH + (n+1) H(+)(in) = a plastoquinol + NAD(+) + n H(+)(out). It catalyses the reaction a plastoquinone + NADPH + (n+1) H(+)(in) = a plastoquinol + NADP(+) + n H(+)(out). NDH shuttles electrons from NAD(P)H:plastoquinone, via FMN and iron-sulfur (Fe-S) centers, to quinones in the photosynthetic chain and possibly in a chloroplast respiratory chain. The immediate electron acceptor for the enzyme in this species is believed to be plastoquinone. Couples the redox reaction to proton translocation, and thus conserves the redox energy in a proton gradient. The sequence is that of NAD(P)H-quinone oxidoreductase subunit 1, chloroplastic from Drimys granadensis.